A 235-amino-acid chain; its full sequence is Lipoprotein-releasing system ATP-binding protein LolD (235 aa).

Residues 7 to 234 enclose the ABC transporter domain; it reads LQCTNLSKRY…QQELTLMGAR (228 aa). 43–50 serves as a coordination point for ATP; it reads GSSGSGKS.

This sequence belongs to the ABC transporter superfamily. Lipoprotein translocase (TC 3.A.1.125) family. As to quaternary structure, the complex is composed of two ATP-binding proteins (LolD) and two transmembrane proteins (LolC and LolE).

The protein localises to the cell inner membrane. Its function is as follows. Part of the ABC transporter complex LolCDE involved in the translocation of mature outer membrane-directed lipoproteins, from the inner membrane to the periplasmic chaperone, LolA. Responsible for the formation of the LolA-lipoprotein complex in an ATP-dependent manner. The sequence is that of Lipoprotein-releasing system ATP-binding protein LolD from Pectobacterium atrosepticum (strain SCRI 1043 / ATCC BAA-672) (Erwinia carotovora subsp. atroseptica).